The sequence spans 147 residues: Large ribosomal subunit protein bL9 (147 aa).

This sequence belongs to the bacterial ribosomal protein bL9 family.

Binds to the 23S rRNA. The sequence is that of Large ribosomal subunit protein bL9 from Clostridium botulinum (strain 657 / Type Ba4).